The chain runs to 360 residues: Protein Wnt-2 (360 aa).

The N-terminal stretch at 1 to 25 (MNAPLGGIWPWLPLLLTWLTPEVSS) is a signal peptide. Intrachain disulfides connect cysteine 76/cysteine 87, cysteine 127/cysteine 135, cysteine 137/cysteine 157, cysteine 206/cysteine 220, cysteine 208/cysteine 215, cysteine 278/cysteine 309, cysteine 294/cysteine 304, cysteine 308/cysteine 348, cysteine 324/cysteine 339, cysteine 326/cysteine 336, and cysteine 331/cysteine 332. Serine 212 carries O-palmitoleoyl serine; by PORCN lipidation. A glycan (N-linked (GlcNAc...) asparagine) is linked at asparagine 295.

Belongs to the Wnt family. In terms of processing, palmitoleoylation is required for efficient binding to frizzled receptors. Depalmitoleoylation leads to Wnt signaling pathway inhibition.

It localises to the secreted. It is found in the extracellular space. The protein localises to the extracellular matrix. Ligand for members of the frizzled family of seven transmembrane receptors. Functions in the canonical Wnt signaling pathway that results in activation of transcription factors of the TCF/LEF family. Functions as a upstream regulator of FGF10 expression. Plays an important role in embryonic lung development. May contribute to embryonic brain development by regulating the proliferation of dopaminergic precursors and neurons. In Felis catus (Cat), this protein is Protein Wnt-2 (WNT2).